We begin with the raw amino-acid sequence, 130 residues long: Small ribosomal subunit protein uS11 (130 aa).

The protein belongs to the universal ribosomal protein uS11 family. In terms of assembly, part of the 30S ribosomal subunit. Interacts with proteins S7 and S18. Binds to IF-3.

In terms of biological role, located on the platform of the 30S subunit, it bridges several disparate RNA helices of the 16S rRNA. Forms part of the Shine-Dalgarno cleft in the 70S ribosome. This Shewanella frigidimarina (strain NCIMB 400) protein is Small ribosomal subunit protein uS11.